The chain runs to 136 residues: HTH-type transcriptional regulator LrpA (136 aa).

The 62-residue stretch at Ile-2–Ser-63 folds into the HTH asnC-type domain. The segment at residues Met-21 to Val-40 is a DNA-binding region (H-T-H motif).

Functionally, negative regulation of glyA transcription and kinB-dependent sporulation. This Bacillus subtilis (strain 168) protein is HTH-type transcriptional regulator LrpA (lrpA).